The chain runs to 340 residues: NADH-quinone oxidoreductase subunit H 2 (340 aa).

8 consecutive transmembrane segments (helical) span residues 10-30, 84-104, 126-146, 172-192, 198-218, 255-275, 279-299, and 318-338; these read LIVA…ILLL, FLFK…FVAI, VALL…IFGG, MGFA…LDIV, VWNI…GLAE, VIVL…WNGI, MPPL…FIWF, and VLLP…GAAA.

It belongs to the complex I subunit 1 family. As to quaternary structure, NDH-1 is composed of 14 different subunits. Subunits NuoA, H, J, K, L, M, N constitute the membrane sector of the complex.

Its subcellular location is the cell inner membrane. The enzyme catalyses a quinone + NADH + 5 H(+)(in) = a quinol + NAD(+) + 4 H(+)(out). In terms of biological role, NDH-1 shuttles electrons from NADH, via FMN and iron-sulfur (Fe-S) centers, to quinones in the respiratory chain. The immediate electron acceptor for the enzyme in this species is believed to be ubiquinone. Couples the redox reaction to proton translocation (for every two electrons transferred, four hydrogen ions are translocated across the cytoplasmic membrane), and thus conserves the redox energy in a proton gradient. This subunit may bind ubiquinone. The protein is NADH-quinone oxidoreductase subunit H 2 of Rhizobium etli (strain ATCC 51251 / DSM 11541 / JCM 21823 / NBRC 15573 / CFN 42).